The chain runs to 213 residues: Phosphatidylethanolamine N-methyltransferase A (213 aa).

Topologically, residues 1-21 (MIVEHAIDYIDYLMNYVDFTE) are lumenal. The segment at residues 22–42 (KYFLLTIACVVFNPTWWNITA) is an intramembrane region (helical). The Lumenal segment spans residues 43-54 (RMEYKTKFMTKI). The helical transmembrane segment at 55–75 (CGSKENGCYLLAFLIFSLGIL) threads the bilayer. Residues 76-102 (RDWLFSEALIRQPIFQEFDRFEVEVLS) are Cytoplasmic-facing. A helical transmembrane segment spans residues 103 to 123 (YILYGFGGILVLAAYLKLGIT). 107–109 (GFG) contributes to the S-adenosyl-L-methionine binding site. Residues 124-166 (GTYLGDYFGILMKERVTGFPFNVMNNPMYNGSVMLFIAHALSY) are Lumenal-facing. Residues 167–187 (KSVAGLVLSFVVYVVYKFALI) traverse the membrane as a helical segment. Residues 188-213 (FEESFTNYIYSTAAANAAKKNKSKSK) lie on the Cytoplasmic side of the membrane. Residue 189 to 190 (EE) coordinates S-adenosyl-L-methionine.

It belongs to the class VI-like SAM-binding methyltransferase superfamily. PEMT/PEM2 methyltransferase family.

The protein resides in the endoplasmic reticulum membrane. The protein localises to the mitochondrion membrane. The catalysed reaction is a 1,2-diacyl-sn-glycero-3-phospho-N-methylethanolamine + S-adenosyl-L-methionine = a 1,2-diacyl-sn-glycero-3-phospho-N,N-dimethylethanolamine + S-adenosyl-L-homocysteine + H(+). It carries out the reaction a 1,2-diacyl-sn-glycero-3-phospho-N,N-dimethylethanolamine + S-adenosyl-L-methionine = a 1,2-diacyl-sn-glycero-3-phosphocholine + S-adenosyl-L-homocysteine + H(+). It catalyses the reaction a 1,2-diacyl-sn-glycero-3-phosphoethanolamine + S-adenosyl-L-methionine = a 1,2-diacyl-sn-glycero-3-phospho-N-methylethanolamine + S-adenosyl-L-homocysteine + H(+). The protein operates within phospholipid metabolism; phosphatidylcholine biosynthesis. In terms of biological role, catalyzes the three sequential steps of the methylation pathway of phosphatidylcholine biosynthesis, the SAM-dependent methylation of phosphatidylethanolamine (PE) to phosphatidylmonomethylethanolamine (PMME), PMME to phosphatidyldimethylethanolamine (PDME), and PDME to phosphatidylcholine (PC). The protein is Phosphatidylethanolamine N-methyltransferase A (pemtA) of Dictyostelium discoideum (Social amoeba).